Here is a 341-residue protein sequence, read N- to C-terminus: 3-dehydroquinate synthase (341 aa).

Residues 54-59 (DGEKYK), 88-92 (GVVTD), 112-113 (TT), K125, K133, and 151-154 (TLST) each bind NAD(+). 3 residues coordinate Zn(2+): E166, H220, and H236.

Belongs to the sugar phosphate cyclases superfamily. Dehydroquinate synthase family. The cofactor is NAD(+). Requires Co(2+) as cofactor. Zn(2+) serves as cofactor.

The protein localises to the cytoplasm. It catalyses the reaction 7-phospho-2-dehydro-3-deoxy-D-arabino-heptonate = 3-dehydroquinate + phosphate. The protein operates within metabolic intermediate biosynthesis; chorismate biosynthesis; chorismate from D-erythrose 4-phosphate and phosphoenolpyruvate: step 2/7. Its function is as follows. Catalyzes the conversion of 3-deoxy-D-arabino-heptulosonate 7-phosphate (DAHP) to dehydroquinate (DHQ). The sequence is that of 3-dehydroquinate synthase from Thermococcus kodakarensis (strain ATCC BAA-918 / JCM 12380 / KOD1) (Pyrococcus kodakaraensis (strain KOD1)).